Here is a 120-residue protein sequence, read N- to C-terminus: Spermidine export protein MdtJ (120 aa).

4 consecutive transmembrane segments (helical) span residues 1–21 (MFYW…TLSM), 31–51 (AGYI…SFAV), 54–74 (IALG…ITVF), and 81–101 (EVLS…IVLI).

This sequence belongs to the drug/metabolite transporter (DMT) superfamily. Small multidrug resistance (SMR) (TC 2.A.7.1) family. MdtJ subfamily. In terms of assembly, forms a complex with MdtI.

Its subcellular location is the cell inner membrane. Catalyzes the excretion of spermidine. This Salmonella arizonae (strain ATCC BAA-731 / CDC346-86 / RSK2980) protein is Spermidine export protein MdtJ.